Consider the following 1093-residue polypeptide: Error-prone DNA polymerase (1093 aa).

Residues 1–55 (MGWFNGPPSWAEMERVLDSKPRRAGESAAPEPDGPLSRGRATYRPPDEGRAARSS) form a disordered region. A compositionally biased stretch (basic and acidic residues) spans 12–25 (EMERVLDSKPRRAG).

It belongs to the DNA polymerase type-C family. DnaE2 subfamily.

It localises to the cytoplasm. It catalyses the reaction DNA(n) + a 2'-deoxyribonucleoside 5'-triphosphate = DNA(n+1) + diphosphate. In terms of biological role, DNA polymerase involved in damage-induced mutagenesis and translesion synthesis (TLS). It is not the major replicative DNA polymerase. The chain is Error-prone DNA polymerase from Mycolicibacterium paratuberculosis (strain ATCC BAA-968 / K-10) (Mycobacterium paratuberculosis).